The following is a 581-amino-acid chain: NADH-quinone oxidoreductase subunit C/D (581 aa).

The interval 1–172 is NADH dehydrogenase I subunit C; sequence MSGAELISDL…PPFVMTAARF (172 aa). An NADH dehydrogenase I subunit D region spans residues 196-581; it reads ELMILNYGPH…IDYVMSDVDR (386 aa).

It in the N-terminal section; belongs to the complex I 30 kDa subunit family. This sequence in the C-terminal section; belongs to the complex I 49 kDa subunit family. NDH-1 is composed of 13 different subunits. Subunits NuoB, CD, E, F, and G constitute the peripheral sector of the complex.

The protein resides in the cell inner membrane. It catalyses the reaction a quinone + NADH + 5 H(+)(in) = a quinol + NAD(+) + 4 H(+)(out). In terms of biological role, NDH-1 shuttles electrons from NADH, via FMN and iron-sulfur (Fe-S) centers, to quinones in the respiratory chain. The immediate electron acceptor for the enzyme in this species is believed to be ubiquinone. Couples the redox reaction to proton translocation (for every two electrons transferred, four hydrogen ions are translocated across the cytoplasmic membrane), and thus conserves the redox energy in a proton gradient. The polypeptide is NADH-quinone oxidoreductase subunit C/D (Rhodopseudomonas palustris (strain BisA53)).